Consider the following 226-residue polypeptide: MEAERRHRALYKGTTPPWKETYRKRCVERLKRNRSKLLDKFRQVGERIHGGVGGSFLVQEVMEEEWKAMQSENGSFPSMWKKEAFSQALNIMRDPDELATLEEIKQELLLEEKAMIEEFENILQFEEQCLDSVVELSTGDQIVCPVCNRNYLTVTSCFIVCQCGVYINTQSQGMSIEKLHSLLESSLTSHGYHCTKLPVFSVATELGGAASLFMSCQECDAMVVIL.

Residues Met-1–Gly-45 are interaction with importin beta. The interval His-49–Ser-171 is interaction with RPA1. The segment at Cys-144 to Cys-219 adopts an RIP-type zinc-finger fold.

As to quaternary structure, interacts directly with the rpa1 subunit of RPA complex. Interacts with importin beta, but not with importin alpha. Forms a complex with the RPA complex and importin beta, which is dissociated by Ran-GTP.

The protein localises to the nucleus. Its function is as follows. Mediates the import of RPA complex into the nucleus, via its interaction with importin beta. This Xenopus laevis (African clawed frog) protein is RPA-interacting protein A (rpain-a).